A 203-amino-acid chain; its full sequence is UPF0637 protein SSP1683 (203 aa).

The protein belongs to the UPF0637 family.

The polypeptide is UPF0637 protein SSP1683 (Staphylococcus saprophyticus subsp. saprophyticus (strain ATCC 15305 / DSM 20229 / NCIMB 8711 / NCTC 7292 / S-41)).